Reading from the N-terminus, the 183-residue chain is Ribosome rescue factor SmrB (183 aa).

The region spanning 98 to 173 is the Smr domain; that stretch reads LDLHGLTQLQ…GDAALLVLIE (76 aa).

It belongs to the SmrB family. In terms of assembly, associates with collided ribosomes, but not with correctly translating polysomes.

In terms of biological role, acts as a ribosome collision sensor. Detects stalled/collided disomes (pairs of ribosomes where the leading ribosome is stalled and a second ribosome has collided with it) and endonucleolytically cleaves mRNA at the 5' boundary of the stalled ribosome. Stalled/collided disomes form a new interface (primarily via the 30S subunits) that binds SmrB. Cleaved mRNA becomes available for tmRNA ligation, leading to ribosomal subunit dissociation and rescue of stalled ribosomes. This Shigella sonnei (strain Ss046) protein is Ribosome rescue factor SmrB.